The following is a 240-amino-acid chain: Ribonuclease 3 (240 aa).

Residues 9-141 (VEEFQKETGI…LLAAIYLDQG (133 aa)) enclose the RNase III domain. Glu54 contacts Mg(2+). Asp58 is a catalytic residue. Residues Asp127 and Glu130 each contribute to the Mg(2+) site. The active site involves Glu130. The DRBM domain maps to 168–237 (DYKTALQEIV…ARIAYEKLLK (70 aa)).

This sequence belongs to the ribonuclease III family. As to quaternary structure, homodimer. It depends on Mg(2+) as a cofactor.

Its subcellular location is the cytoplasm. It catalyses the reaction Endonucleolytic cleavage to 5'-phosphomonoester.. Functionally, digests double-stranded RNA. Involved in the processing of primary rRNA transcript to yield the immediate precursors to the large and small rRNAs (23S and 16S). Also processes some mRNAs, and tRNAs when they are encoded in the rRNA operon. Probably processes pre-crRNA and tracrRNA of type II CRISPR loci if present in the organism. This Thermotoga maritima (strain ATCC 43589 / DSM 3109 / JCM 10099 / NBRC 100826 / MSB8) protein is Ribonuclease 3 (rnc).